We begin with the raw amino-acid sequence, 277 residues long: Inositol monophosphatase 1 (277 aa).

Mg(2+)-binding residues include glutamate 70, aspartate 90, isoleucine 92, and aspartate 93. Substrate is bound at residue glutamate 70. 92 to 95 (IDGT) is a binding site for substrate. The residue at position 168 (threonine 168) is a Phosphothreonine. Residues 194–196 (GTA), glutamate 213, and aspartate 220 each bind substrate. Aspartate 220 is a binding site for Mg(2+).

Belongs to the inositol monophosphatase superfamily. As to quaternary structure, homodimer. Mg(2+) is required as a cofactor.

The protein localises to the cytoplasm. It carries out the reaction a myo-inositol phosphate + H2O = myo-inositol + phosphate. The catalysed reaction is 1D-myo-inositol 1-phosphate + H2O = myo-inositol + phosphate. The enzyme catalyses 1D-myo-inositol 2-phosphate + H2O = myo-inositol + phosphate. It catalyses the reaction 1D-myo-inositol 3-phosphate + H2O = myo-inositol + phosphate. It carries out the reaction 1D-myo-inositol 4-phosphate + H2O = myo-inositol + phosphate. The catalysed reaction is 1D-myo-inositol 5-phosphate + H2O = myo-inositol + phosphate. The enzyme catalyses 1D-myo-inositol 6-phosphate + H2O = myo-inositol + phosphate. It catalyses the reaction scyllo-inositol 1-phosphate + H2O = scyllo-inositol + phosphate. It carries out the reaction alpha-D-galactose 1-phosphate + H2O = D-galactose + phosphate. The catalysed reaction is alpha-D-glucose 1-phosphate + H2O = D-glucose + phosphate. The enzyme catalyses D-glucose 6-phosphate + H2O = D-glucose + phosphate. It catalyses the reaction beta-D-fructose 1-phosphate + H2O = D-fructose + phosphate. It carries out the reaction glycerol 2-phosphate + H2O = glycerol + phosphate. The catalysed reaction is adenosine 2'-phosphate + H2O = adenosine + phosphate. The protein operates within polyol metabolism; myo-inositol biosynthesis; myo-inositol from D-glucose 6-phosphate: step 2/2. With respect to regulation, activity with myo-inositol monophosphates and D-galactose 1-phosphate is inhibited by Li(+), Ca(2+) and Mn(2+), but also by Mg(2+) at concentrations above 3 mM. Its function is as follows. Phosphatase involved in the dephosphorylation of myo-inositol monophosphates to generate myo-inositol. Is also able to dephosphorylate scyllo-inositol-phosphate, myo-inositol 1,4-diphosphate, scyllo-inositol-1,3-diphosphate and scyllo-inositol-1,4-diphosphate. Also dephosphorylates in vitro other sugar-phosphates including D-galactose-1-phosphate, glucose-1-phosphate, glucose-6-phosphate, fructose-1-phosphate, beta-glycerophosphate and 2'-AMP. Responsible for the provision of inositol required for synthesis of phosphatidylinositols and polyphosphoinositides, and involved in maintaining normal brain function. Has been implicated as the pharmacological target for lithium (Li(+)) action in brain, which is used to treat bipolar affective disorder. Is equally active with 1D-myo-inositol 1-phosphate, 1D-myo-inositol 3-phosphate and D-galactose 1-phosphate. In Homo sapiens (Human), this protein is Inositol monophosphatase 1.